Consider the following 271-residue polypeptide: GPN-loop GTPase 3 (271 aa).

13–18 is a binding site for GTP; the sequence is GAGKST. The Gly-Pro-Asn (GPN)-loop; involved in dimer interface motif lies at 70–72; it reads GPN. Residue 173–176 coordinates GTP; that stretch reads SKLD.

This sequence belongs to the GPN-loop GTPase family. As to quaternary structure, heterodimers with GPN1 or GPN2. Binds to RNA polymerase II (RNAPII).

In terms of biological role, small GTPase required for proper nuclear import of RNA polymerase II and III (RNAPII and RNAPIII). May act at an RNAP assembly step prior to nuclear import. The sequence is that of GPN-loop GTPase 3 from Kluyveromyces lactis (strain ATCC 8585 / CBS 2359 / DSM 70799 / NBRC 1267 / NRRL Y-1140 / WM37) (Yeast).